Here is a 452-residue protein sequence, read N- to C-terminus: Tubulin gamma chain (452 aa).

Ala142–Gly148 is a GTP binding site.

Belongs to the tubulin family.

It localises to the cytoplasm. It is found in the cytoskeleton. Its subcellular location is the microtubule organizing center. The protein resides in the centrosome. Tubulin is the major constituent of microtubules. The gamma chain is found at microtubule organizing centers (MTOC) such as the spindle poles or the centrosome, suggesting that it is involved in the minus-end nucleation of microtubule assembly. The protein is Tubulin gamma chain (G-TUB) of Plasmodium falciparum (isolate NF54).